Here is a 236-residue protein sequence, read N- to C-terminus: Ribose-5-phosphate isomerase A (236 aa).

Residues 33–36 (TGST), 90–93 (DGAD), and 103–106 (KGGG) each bind substrate. Glutamate 112 serves as the catalytic Proton acceptor. Residue lysine 130 participates in substrate binding.

This sequence belongs to the ribose 5-phosphate isomerase family. In terms of assembly, homodimer.

The enzyme catalyses aldehydo-D-ribose 5-phosphate = D-ribulose 5-phosphate. It functions in the pathway carbohydrate degradation; pentose phosphate pathway; D-ribose 5-phosphate from D-ribulose 5-phosphate (non-oxidative stage): step 1/1. Its function is as follows. Catalyzes the reversible conversion of ribose-5-phosphate to ribulose 5-phosphate. This chain is Ribose-5-phosphate isomerase A, found in Nostoc sp. (strain PCC 7120 / SAG 25.82 / UTEX 2576).